A 154-amino-acid chain; its full sequence is UPF0756 membrane protein BPUM_2558 (154 aa).

Transmembrane regions (helical) follow at residues 8-28 (FLVLLLVIALIAKNNSLILAV), 54-74 (WGVTVITIAVLVPIATGDIGF), 87-107 (WIALGAGILVALIAKNGIVLL), and 117-137 (LVFGTILAVSLFKGVAVGPLI).

The protein belongs to the UPF0756 family.

Its subcellular location is the cell membrane. The sequence is that of UPF0756 membrane protein BPUM_2558 from Bacillus pumilus (strain SAFR-032).